The primary structure comprises 362 residues: F-box protein At2g14710 (362 aa).

The F-box domain occupies 1–47 (MAHLKNLPWELIEEILSRVPPKSLVRFRTVSKQWNALFDDKTFINNH).

This is F-box protein At2g14710 from Arabidopsis thaliana (Mouse-ear cress).